Here is a 42-residue protein sequence, read N- to C-terminus: Serine/threonine-protein phosphatase 5 (42 aa).

Positions 38–42 (QLGVM) are required for autoinhibition.

It belongs to the PPP phosphatase family. PP-5 (PP-T) subfamily. Probably forms a complex composed of chaperones HSP90 and HSP70, co-chaperones STIP1/HOP, CDC37, PPP5C, PTGES3/p23, TSC1 and client protein TSC2. Probably forms a complex composed of chaperones HSP90 and HSP70, co-chaperones CDC37, PPP5C, TSC1 and client protein TSC2, CDK4, AKT, RAF1 and NR3C1; this complex does not contain co-chaperones STIP1/HOP and PTGES3/p23. Part of a complex with HSP90/HSP90AA1 and steroid receptors. Interacts (via TPR repeats) with HSP90AA1 (via TPR repeat-binding motif) or HSPA1A/HSPA1B; the interaction is direct and activates the phosphatase activity. Dissociates from HSPA1A/HSPA1B and HSP90AA1 in response to arachidonic acid. Interacts with CPNE1 (via VWFA domain). Interacts with CDC16, CDC27. Interacts with KLHDC10 (via the 6 Kelch repeats); inhibits the phosphatase activity on MAP3K5. Interacts with ATM and ATR; both interactions are induced by DNA damage and enhance ATM and ATR kinase activity. Interacts with RAD17; reduced by DNA damage. Interacts with nuclear receptors such as NR3C1/GCR and PPARG (activated by agonist); regulates their transactivation activities. Interacts (via TPR repeats) with S100 proteins S100A1, S100A2, S100A6, S100B and S100P; the interactions are calcium-dependent, strongly activate PPP5C phosphatase activity and compete with HSP90AA1 and MAP3K5 interactions. Interacts with SMAD2 and SMAD3 but not with SMAD1; decreases SMAD3 phosphorylation and protein levels. Interacts (via TPR repeats) with CRY1 and CRY2; the interaction with CRY2 down-regulates the phosphatase activity on CSNK1E. Interacts (via TPR repeats) with the active form of RAC1, GNA12 or GNA13; these interactions activate the phosphatase activity and translocate PPP5C to the cell membrane. Interacts with FLCN. The cofactor is Mg(2+). It depends on Mn(2+) as a cofactor. Post-translationally, activated by at least two different proteolytic cleavages producing a 56 kDa and a 50 kDa form.

It is found in the nucleus. Its subcellular location is the cytoplasm. It localises to the cell membrane. The enzyme catalyses O-phospho-L-seryl-[protein] + H2O = L-seryl-[protein] + phosphate. It catalyses the reaction O-phospho-L-threonyl-[protein] + H2O = L-threonyl-[protein] + phosphate. With respect to regulation, autoinhibited. In the autoinhibited state, the TPR domain interacts with the catalytic region and prevents substrate access to the catalytic pocket. Allosterically activated by various polyunsaturated fatty acids, free long-chain fatty-acids and long-chain fatty acyl-CoA esters, arachidonic acid being the most effective activator. HSP90A and probably RAC1, GNA12 and GNA13 can also release the autoinhibition by the TPR repeat. Activation by RAC1, GNA12 and GNA13 is synergistic with the one produced by fatty acids binding. Inhibited by okadaic acid. Serine/threonine-protein phosphatase that dephosphorylates a myriad of proteins involved in different signaling pathways including the kinases CSNK1E, ASK1/MAP3K5, PRKDC and RAF1, the nuclear receptors NR3C1, PPARG, ESR1 and ESR2, SMAD proteins and TAU/MAPT. Implicated in wide ranging cellular processes, including apoptosis, differentiation, DNA damage response, cell survival, regulation of ion channels or circadian rhythms, in response to steroid and thyroid hormones, calcium, fatty acids, TGF-beta as well as oxidative and genotoxic stresses. Participates in the control of DNA damage response mechanisms such as checkpoint activation and DNA damage repair through, for instance, the regulation ATM/ATR-signaling and dephosphorylation of PRKDC and TP53BP1. Inhibits ASK1/MAP3K5-mediated apoptosis induced by oxidative stress. Plays a positive role in adipogenesis, mainly through the dephosphorylation and activation of PPARG transactivation function. Also dephosphorylates and inhibits the anti-adipogenic effect of NR3C1. Regulates the circadian rhythms, through the dephosphorylation and activation of CSNK1E. May modulate TGF-beta signaling pathway by the regulation of SMAD3 phosphorylation and protein expression levels. Dephosphorylates and may play a role in the regulation of TAU/MAPT. Through their dephosphorylation, may play a role in the regulation of ions channels such as KCNH2. Dephosphorylate FNIP1, disrupting interaction with HSP90AA1/Hsp90. The polypeptide is Serine/threonine-protein phosphatase 5 (PPP5C) (Oryctolagus cuniculus (Rabbit)).